We begin with the raw amino-acid sequence, 603 residues long: Serine/threonine-protein kinase PLK1 (603 aa).

The segment at 1–35 (MSAAVTAGKLARAPADPGKAGVPGVAAPGAPAAAP) is disordered. The residue at position 2 (S2) is an N-acetylserine. Phosphothreonine is present on T6. Residues 13-35 (APADPGKAGVPGVAAPGAPAAAP) show a composition bias toward low complexity. Residue K19 forms a Glycyl lysine isopeptide (Lys-Gly) (interchain with G-Cter in ubiquitin) linkage. Positions 53 to 305 (YVRGRFLGKG…INELLNDEFF (253 aa)) constitute a Protein kinase domain. ATP-binding positions include 59 to 67 (LGKGGFAKC) and K82. S103 is subject to Phosphoserine. ATP is bound at residue E131. S137 is modified (phosphoserine). D176 functions as the Proton acceptor in the catalytic mechanism. ATP is bound by residues 178–181 (KLGN) and D194. The segment at 194-221 (DFGLATKVEYDGERKKTLCGTPNYIAPE) is activation loop. T210 carries the post-translational modification Phosphothreonine; by AURKA. Position 214 is a phosphothreonine (T214). S269 carries the post-translational modification Phosphoserine; by autocatalysis. S335 is subject to Phosphoserine. Positions 337–340 (RKPL) match the D-box that targets the protein for proteasomal degradation in anaphase motif. Residue K338 forms a Glycyl lysine isopeptide (Lys-Gly) (interchain with G-Cter in SUMO2) linkage. The interval 338–364 (KPLTVLNKGLENPLPERPREKEEPVVR) is disordered. Residues 351-364 (LPERPREKEEPVVR) show a composition bias toward basic and acidic residues. Phosphoserine occurs at positions 375 and 450. A POLO box 1 domain is found at 410–488 (WVSKWVDYSD…LKYFRNYMSE (79 aa)). K492 participates in a covalent cross-link: Glycyl lysine isopeptide (Lys-Gly) (interchain with G-Cter in ubiquitin). Residues 493–507 (AGANITPREGDELAR) are linker. T498 carries the post-translational modification Phosphothreonine. The POLO box 2 domain occupies 510–592 (YLRTWFRTRS…ARTMVDKLLS (83 aa)). Residues 538-540 (HTK) are important for interaction with phosphorylated proteins.

It belongs to the protein kinase superfamily. Ser/Thr protein kinase family. CDC5/Polo subfamily. In terms of assembly, interacts with CEP170. Interacts with EVI5. Interacts with FAM29A. Interacts with SLX4/BTBD12. Interacts with TTDN1. Interacts (via POLO-box domain) with the phosphorylated form of BUB1, CDC25C and CENPU. Interacts with KIF2A. Interacts with CYLD. Part of an astrin (SPAG5)-kinastrin (SKAP) complex containing KNSTRN, SPAG5, PLK1, DYNLL1 and SGO2. Interacts with BIRC6/bruce. Interacts with CDK1-phosphorylated FRY; this interaction occurs in mitotic cells, but not in interphase cells. FRY interaction facilitates AURKA-mediated PLK1 phosphorylation. Interacts with CDK1-phosphorylated DCTN6 during mitotic prometaphase; the interaction facilitates recruitment to kinetochores. Interacts with CEP68; the interaction phosphorylates CEP68. Interacts (via POLO-box domain) with DCTN1. Interacts with CEP20 in later G1, S, G2 and M phases of the cell cycle; this interaction recruits PLK1 to centrosomes, a step required for S phase progression. Interacts with KLHL22. Interacts (via POLO box domains) with NEDD9/HEF1 (via C-terminus). Interacts with FIRRM (via N-terminus region); required for maintaining, but not activating, PLK1 kinase activity. Interacts with FZR1. Interacts with SKA3; the interaction promotes the stability of PLK1; the interaction promotes the stability of PLK1. Interacts with the MTMR3:MTMR4 heterooligomer; brings CEP55 and PLK1 together during early mitosis, regulating the phosphorylation of CEP55 by PLK1 and its recruitment to the midbody where it can mediate cell abscission. In terms of processing, catalytic activity is enhanced by phosphorylation of Thr-210. Phosphorylation at Thr-210 is first detected on centrosomes in the G2 phase of the cell cycle, peaks in prometaphase and gradually disappears from centrosomes during anaphase. Dephosphorylation at Thr-210 at centrosomes is probably mediated by protein phosphatase 1C (PP1C), via interaction with PPP1R12A/MYPT1. Autophosphorylation and phosphorylation of Ser-137 may not be significant for the activation of PLK1 during mitosis, but may enhance catalytic activity during recovery after DNA damage checkpoint. Phosphorylated in vitro by STK10. Ubiquitinated by the anaphase promoting complex/cyclosome (APC/C) in anaphase and following DNA damage, leading to its degradation by the proteasome. Ubiquitination is mediated via its interaction with FZR1/CDH1. Ubiquitination and subsequent degradation prevents entry into mitosis and is essential to maintain an efficient G2 DNA damage checkpoint. Monoubiquitination at Lys-492 by the BCR(KLHL22) ubiquitin ligase complex does not lead to degradation: it promotes PLK1 dissociation from phosphoreceptor proteins and subsequent removal from kinetochores, allowing silencing of the spindle assembly checkpoint (SAC) and chromosome segregation. Placenta and colon.

The protein localises to the nucleus. The protein resides in the chromosome. It is found in the centromere. Its subcellular location is the kinetochore. It localises to the cytoplasm. The protein localises to the cytoskeleton. The protein resides in the microtubule organizing center. It is found in the centrosome. Its subcellular location is the spindle. It localises to the midbody. It carries out the reaction L-seryl-[protein] + ATP = O-phospho-L-seryl-[protein] + ADP + H(+). The catalysed reaction is L-threonyl-[protein] + ATP = O-phospho-L-threonyl-[protein] + ADP + H(+). With respect to regulation, activated by phosphorylation of Thr-210 by AURKA; phosphorylation by AURKA is enhanced by BORA. Once activated, activity is stimulated by binding target proteins. Binding of target proteins has no effect on the non-activated kinase. Several inhibitors targeting PLKs are currently in development and are under investigation in a growing number of clinical trials, such as BI 2536, an ATP-competitive PLK1 inhibitor or BI 6727, a dihydropteridinone that specifically inhibits the catalytic activity of PLK1. Its function is as follows. Serine/threonine-protein kinase that performs several important functions throughout M phase of the cell cycle, including the regulation of centrosome maturation and spindle assembly, the removal of cohesins from chromosome arms, the inactivation of anaphase-promoting complex/cyclosome (APC/C) inhibitors, and the regulation of mitotic exit and cytokinesis. Polo-like kinase proteins act by binding and phosphorylating proteins that are already phosphorylated on a specific motif recognized by the POLO box domains. Phosphorylates BORA, BUB1B/BUBR1, CCNB1, CDC25C, CEP55, ECT2, ERCC6L, FBXO5/EMI1, FOXM1, KIF20A/MKLP2, CENPU, NEDD1, NINL, NPM1, NUDC, PKMYT1/MYT1, KIZ, MRE11, PPP1R12A/MYPT1, POLQ, PRC1, RACGAP1/CYK4, RAD51, RHNO1, SGO1, STAG2/SA2, TEX14, TOPORS, p73/TP73, TPT1, WEE1 and HNRNPU. Plays a key role in centrosome functions and the assembly of bipolar spindles by phosphorylating KIZ, NEDD1 and NINL. NEDD1 phosphorylation promotes subsequent targeting of the gamma-tubulin ring complex (gTuRC) to the centrosome, an important step for spindle formation. Phosphorylation of NINL component of the centrosome leads to NINL dissociation from other centrosomal proteins. Involved in mitosis exit and cytokinesis by phosphorylating CEP55, ECT2, KIF20A/MKLP2, CENPU, PRC1 and RACGAP1. Recruited at the central spindle by phosphorylating and docking PRC1 and KIF20A/MKLP2; creates its own docking sites on PRC1 and KIF20A/MKLP2 by mediating phosphorylation of sites subsequently recognized by the POLO box domains. Phosphorylates RACGAP1, thereby creating a docking site for the Rho GTP exchange factor ECT2 that is essential for the cleavage furrow formation. Promotes the central spindle recruitment of ECT2. Plays a central role in G2/M transition of mitotic cell cycle by phosphorylating CCNB1, CDC25C, FOXM1, CENPU, PKMYT1/MYT1, PPP1R12A/MYPT1 and WEE1. Part of a regulatory circuit that promotes the activation of CDK1 by phosphorylating the positive regulator CDC25C and inhibiting the negative regulators WEE1 and PKMYT1/MYT1. Also acts by mediating phosphorylation of cyclin-B1 (CCNB1) on centrosomes in prophase. Phosphorylates FOXM1, a key mitotic transcription regulator, leading to enhance FOXM1 transcriptional activity. Involved in kinetochore functions and sister chromatid cohesion by phosphorylating BUB1B/BUBR1, FBXO5/EMI1 and STAG2/SA2. PLK1 is high on non-attached kinetochores suggesting a role of PLK1 in kinetochore attachment or in spindle assembly checkpoint (SAC) regulation. Required for kinetochore localization of BUB1B. Regulates the dissociation of cohesin from chromosomes by phosphorylating cohesin subunits such as STAG2/SA2. Phosphorylates SGO1: required for spindle pole localization of isoform 3 of SGO1 and plays a role in regulating its centriole cohesion function. Mediates phosphorylation of FBXO5/EMI1, a negative regulator of the APC/C complex during prophase, leading to FBXO5/EMI1 ubiquitination and degradation by the proteasome. Acts as a negative regulator of p53 family members: phosphorylates TOPORS, leading to inhibit the sumoylation of p53/TP53 and simultaneously enhance the ubiquitination and subsequent degradation of p53/TP53. Phosphorylates the transactivation domain of the transcription factor p73/TP73, leading to inhibit p73/TP73-mediated transcriptional activation and pro-apoptotic functions. Phosphorylates BORA, and thereby promotes the degradation of BORA. Contributes to the regulation of AURKA function. Also required for recovery after DNA damage checkpoint and entry into mitosis. Phosphorylates MISP, leading to stabilization of cortical and astral microtubule attachments required for proper spindle positioning. Together with MEIKIN, acts as a regulator of kinetochore function during meiosis I: required both for mono-orientation of kinetochores on sister chromosomes and protection of centromeric cohesin from separase-mediated cleavage. Phosphorylates CEP68 and is required for its degradation. Regulates nuclear envelope breakdown during prophase by phosphorylating DCTN1 resulting in its localization in the nuclear envelope. Phosphorylates the heat shock transcription factor HSF1, promoting HSF1 nuclear translocation upon heat shock. Phosphorylates HSF1 also in the early mitotic period; this phosphorylation regulates HSF1 localization to the spindle pole, the recruitment of the SCF(BTRC) ubiquitin ligase complex induicing HSF1 degradation, and hence mitotic progression. Regulates mitotic progression by phosphorylating RIOK2. Through the phosphorylation of DZIP1 regulates the localization during mitosis of the BBSome, a ciliary protein complex involved in cilium biogenesis. Regulates DNA repair during mitosis by mediating phosphorylation of POLQ and RHNO1, thereby promoting POLQ recruitment to DNA damage sites. Phosphorylates ATXN10 which may play a role in the regulation of cytokinesis and may stimulate the proteasome-mediated degradation of ATXN10. This is Serine/threonine-protein kinase PLK1 (PLK1) from Homo sapiens (Human).